The primary structure comprises 218 residues: Small ribosomal subunit protein uS5 (218 aa).

An S5 DRBM domain is found at 55-118 (LDHEVIDVSI…RNAKLNIIPV (64 aa)).

The protein belongs to the universal ribosomal protein uS5 family. Part of the 30S ribosomal subunit. Contacts protein S4.

With S4 and S12 plays an important role in translational accuracy. The protein is Small ribosomal subunit protein uS5 of Aeropyrum pernix (strain ATCC 700893 / DSM 11879 / JCM 9820 / NBRC 100138 / K1).